Here is a 213-residue protein sequence, read N- to C-terminus: Pyrrolidone-carboxylate peptidase (213 aa).

Active-site residues include glutamate 78, cysteine 141, and histidine 165.

It belongs to the peptidase C15 family. Homotetramer.

The protein resides in the cytoplasm. It carries out the reaction Release of an N-terminal pyroglutamyl group from a polypeptide, the second amino acid generally not being Pro.. Removes 5-oxoproline from various penultimate amino acid residues except L-proline. The polypeptide is Pyrrolidone-carboxylate peptidase (Staphylococcus saprophyticus subsp. saprophyticus (strain ATCC 15305 / DSM 20229 / NCIMB 8711 / NCTC 7292 / S-41)).